Consider the following 138-residue polypeptide: Acidic phospholipase A2 BE-I-PLA2 (138 aa).

A signal peptide spans 1–16 (MRTLWIMAVLLVGVEG). Cystine bridges form between Cys42–Cys131, Cys44–Cys60, Cys59–Cys111, Cys65–Cys138, Cys66–Cys104, Cys73–Cys97, and Cys91–Cys102. Positions 43, 45, and 47 each coordinate Ca(2+). His63 is a catalytic residue. Asp64 contributes to the Ca(2+) binding site. The active site involves Asp105.

Belongs to the phospholipase A2 family. Group II subfamily. D49 sub-subfamily. It depends on Ca(2+) as a cofactor. Expressed by the venom gland.

The protein resides in the secreted. It carries out the reaction a 1,2-diacyl-sn-glycero-3-phosphocholine + H2O = a 1-acyl-sn-glycero-3-phosphocholine + a fatty acid + H(+). Functionally, snake venom phospholipase A2 that shows a potent inhibition of human platelet aggregation. This inhibition is concentration-dependent when aggregation is induced by collagen, and concentration-independent when aggregation is induced by arachidonic acid. In human umbilical-cord vein endothelial cells, this toxin stimulates endothelial cells to release prostaglandin I(2), suggesting an increase of its potential anti-platelet activity in vivo. PLA2 catalyzes the calcium-dependent hydrolysis of the 2-acyl groups in 3-sn-phosphoglycerides. The chain is Acidic phospholipase A2 BE-I-PLA2 from Bothrops erythromelas (Caatinga lance head).